Reading from the N-terminus, the 63-residue chain is Anaphase-promoting complex subunit 13 (63 aa).

The disordered stretch occupies residues 36 to 63 (KTDDTEETNQETQQADAETWRDLALDTQ). Residues 53 to 63 (ETWRDLALDTQ) are compositionally biased toward basic and acidic residues.

Belongs to the APC13 family. Component of the anaphase promoting complex/cyclosome (APC/C) complex. As to expression, expressed constitutively in roots, leaves, stems, buds, flowers, and seeds.

The protein resides in the nucleus. It participates in protein modification; protein ubiquitination. Its function is as follows. Component of the anaphase promoting complex/cyclosome (APC/C), a cell cycle-regulated E3 ubiquitin ligase that controls progression through mitosis and the G1 phase of the cell cycle. The APC/C complex acts by mediating ubiquitination and subsequent degradation of target proteins. Regulates global growth and development, including phyllotaxis and apical dominance. Required for pollen maturation. Promotes (pri) miRNA transcription of each MIR159 genes. The sequence is that of Anaphase-promoting complex subunit 13 from Arabidopsis thaliana (Mouse-ear cress).